Here is a 697-residue protein sequence, read N- to C-terminus: Mediator of RNA polymerase II transcription subunit 16 (697 aa).

WD repeat units follow at residues 68–107 (GHQEVITCLEWDQSGSRLLSADADGRIKCWGMTDHLANSW), 199–241 (RCRV…VSEK), 264–308 (DKFP…LPLN), and 622–663 (NQGS…CLPV).

The protein belongs to the Mediator complex subunit 16 family. Component of the Mediator complex.

The protein localises to the nucleus. Functionally, component of the Mediator complex, a coactivator involved in the regulated transcription of nearly all RNA polymerase II-dependent genes. Mediator functions as a bridge to convey information from gene-specific regulatory proteins to the basal RNA polymerase II transcription machinery. Mediator is recruited to promoters by direct interactions with regulatory proteins and serves as a scaffold for the assembly of a functional preinitiation complex with RNA polymerase II and the general transcription factors. This is Mediator of RNA polymerase II transcription subunit 16 (med16) from Xenopus laevis (African clawed frog).